The primary structure comprises 495 residues: MTLNMMLDNAVPEAIAGALTQQHPGLFFTMVEQASVAISLTDARANITYANPAFCRQTGYSLAQLLNQNPRLLASSQTPREIYQEMWQTLLQRQPWRGQLINQARDGGLYLVDIDITPVLNPQGELEHYLAMQRDISVSYTLEQRLRNHMTLMEAVLNNIPAAVVVVDEQDRVVMDNLAYKTFCADCGGKELLVELQVSPRKMGPGAEQILPVVVRGAVRWLSVTCWALPGVSEEASRYFVDSAPARTLMVIADCTQQRQQQEQGRLDRLKQQMTAGKLLAAIRESLDAALIQLNCPINMLAAARRLNGEGSGNVALDAAWREGEEAMARLQRCRPSLELESNAVWPLQPFFDDLYALYRTRFDDRARLQVDMASPHLVGFGQRTQLLACLSLWLDRTLALAAELPSVPLEIELYAEEDEGWLSLYLNDNVPLLQVRYAHSPDALNSPGKGMELRLIQTLVAYHRGAIELASRPQGGTSLVLRFPLFNTLTGGEQ.

In terms of domain architecture, PAS 1 spans His-23–Arg-93. The PAC domain occupies Gln-94–Asn-148. Residues Thr-151–Val-174 form the PAS 2; truncated domain.

FAD serves as cofactor.

Functionally, required for the inhibition of NifA activity in response to oxygen and low level of fixed nitrogen. The chain is Nitrogen fixation regulatory protein (nifL) from Klebsiella pneumoniae.